The sequence spans 281 residues: 2-dehydro-3-deoxyphosphooctonate aldolase (281 aa).

Belongs to the KdsA family.

The protein localises to the cytoplasm. It carries out the reaction D-arabinose 5-phosphate + phosphoenolpyruvate + H2O = 3-deoxy-alpha-D-manno-2-octulosonate-8-phosphate + phosphate. It functions in the pathway carbohydrate biosynthesis; 3-deoxy-D-manno-octulosonate biosynthesis; 3-deoxy-D-manno-octulosonate from D-ribulose 5-phosphate: step 2/3. The protein operates within bacterial outer membrane biogenesis; lipopolysaccharide biosynthesis. This chain is 2-dehydro-3-deoxyphosphooctonate aldolase, found in Psychromonas ingrahamii (strain DSM 17664 / CCUG 51855 / 37).